The primary structure comprises 91 residues: Putative regulatory protein DSY2730 (91 aa).

The protein belongs to the RemA family.

The protein is Putative regulatory protein DSY2730 of Desulfitobacterium hafniense (strain Y51).